Reading from the N-terminus, the 859-residue chain is Protein EFR3 homolog (859 aa).

Disordered regions lie at residues 638–657 (DDPL…TPRT) and 697–724 (RDGN…PDGY). Over residues 704–722 (WQREDGQNFDSTDGRESPD) the composition is skewed to basic and acidic residues.

The protein belongs to the EFR3 family.

This Caenorhabditis briggsae protein is Protein EFR3 homolog.